The sequence spans 650 residues: DNA mismatch repair protein MutL (650 aa).

Disordered regions lie at residues 358–392 (EASQ…QPLV) and 408–448 (QPRP…QSAA). Over residues 367–384 (TPQPRPALTPGHPDPPPQ) the composition is skewed to pro residues. A compositionally biased stretch (low complexity) spans 430–444 (PYAPIAAAPVPASEP).

The protein belongs to the DNA mismatch repair MutL/HexB family.

This protein is involved in the repair of mismatches in DNA. It is required for dam-dependent methyl-directed DNA mismatch repair. May act as a 'molecular matchmaker', a protein that promotes the formation of a stable complex between two or more DNA-binding proteins in an ATP-dependent manner without itself being part of a final effector complex. This chain is DNA mismatch repair protein MutL, found in Geobacter sp. (strain M21).